The following is a 177-amino-acid chain: ATP synthase subunit delta (177 aa).

Belongs to the ATPase delta chain family. F-type ATPases have 2 components, F(1) - the catalytic core - and F(0) - the membrane proton channel. F(1) has five subunits: alpha(3), beta(3), gamma(1), delta(1), epsilon(1). F(0) has three main subunits: a(1), b(2) and c(10-14). The alpha and beta chains form an alternating ring which encloses part of the gamma chain. F(1) is attached to F(0) by a central stalk formed by the gamma and epsilon chains, while a peripheral stalk is formed by the delta and b chains.

Its subcellular location is the cell inner membrane. Its function is as follows. F(1)F(0) ATP synthase produces ATP from ADP in the presence of a proton or sodium gradient. F-type ATPases consist of two structural domains, F(1) containing the extramembraneous catalytic core and F(0) containing the membrane proton channel, linked together by a central stalk and a peripheral stalk. During catalysis, ATP synthesis in the catalytic domain of F(1) is coupled via a rotary mechanism of the central stalk subunits to proton translocation. This protein is part of the stalk that links CF(0) to CF(1). It either transmits conformational changes from CF(0) to CF(1) or is implicated in proton conduction. This is ATP synthase subunit delta from Erwinia tasmaniensis (strain DSM 17950 / CFBP 7177 / CIP 109463 / NCPPB 4357 / Et1/99).